Consider the following 784-residue polypeptide: LPS-assembly protein LptD (784 aa).

The signal sequence occupies residues 1–24; the sequence is MKKRIPTLLATMIATALYSQQGLA. Disulfide bonds link C31–C724 and C173–C725.

The protein belongs to the LptD family. In terms of assembly, component of the lipopolysaccharide transport and assembly complex. Interacts with LptE and LptA. May interact with LptE during assembly of LptD by the beta-barrel assembly machine (BAM). Also interacts with LptM, which promotes the efficient assembly of the LptDE translocon by the BAM complex. In terms of processing, contains two intramolecular disulfide bonds. At least one disulfide bond is required for activity, and protein is probably fully oxidized in vivo.

Its subcellular location is the cell outer membrane. In terms of biological role, together with LptE, is involved in the assembly of lipopolysaccharide (LPS) at the surface of the outer membrane. Contributes to n-hexane resistance. The protein is LPS-assembly protein LptD of Escherichia coli (strain K12).